Reading from the N-terminus, the 446-residue chain is Methionine aminopeptidase 2 (446 aa).

The interval 1-85 (MAGVTEGEDT…KNKKKKKKKI (85 aa)) is disordered. Over residues 8–32 (EDTKVIESKINELNIDKPKLEDNNE) the composition is skewed to basic and acidic residues. Residues 42 to 58 (SGDDDDDDKEEDDDNEI) show a composition bias toward acidic residues. The span at 73 to 85 (KKNKNKKKKKKKI) shows a compositional bias: basic residues. Residue His-197 participates in substrate binding. A divalent metal cation contacts are provided by Asp-217, Asp-228, and His-299. His-307 contributes to the substrate binding site. A divalent metal cation contacts are provided by Glu-332 and Glu-427.

It belongs to the peptidase M24A family. Methionine aminopeptidase eukaryotic type 2 subfamily. The cofactor is Co(2+). Requires Zn(2+) as cofactor. Mn(2+) serves as cofactor. It depends on Fe(2+) as a cofactor.

Its subcellular location is the cytoplasm. It catalyses the reaction Release of N-terminal amino acids, preferentially methionine, from peptides and arylamides.. Its function is as follows. Cotranslationally removes the N-terminal methionine from nascent proteins. The N-terminal methionine is often cleaved when the second residue in the primary sequence is small and uncharged (Met-Ala-, Cys, Gly, Pro, Ser, Thr, or Val). This is Methionine aminopeptidase 2 from Candida albicans (strain SC5314 / ATCC MYA-2876) (Yeast).